We begin with the raw amino-acid sequence, 462 residues long: Semenogelin-1 (462 aa).

An N-terminal signal peptide occupies residues 1-23 (MKPNIIFVLSLLLILEKQAAVMG). Gln24 bears the Pyrrolidone carboxylic acid mark. The tract at residues 24–61 (QKGGSKGRLPSEFSQFPHGQKGQHYSGQKGKQQTESKG) is disordered. The segment covering 46-61 (QHYSGQKGKQQTESKG) has biased composition (polar residues). Repeat copies occupy residues 70 to 129 (HVDA…VVIH), 141 to 200 (NPSQ…QTEE), and 201 to 260 (LVAN…QDEL). Residues 70 to 439 (HVDANDHDQS…SHGGLDIVII (370 aa)) form a repeat-rich region region. 2 disordered regions span residues 131 to 157 (KGGK…GISS) and 173 to 194 (KEQT…QSSY). The span at 138-157 (GTQNPSQDQGNSPSGKGISS) shows a compositional bias: polar residues. Residues 164-283 (ERLWVHGLSK…NQDQQHGRKA (120 aa)) form an interaction with EPPIN region. The interval 261-380 (LVYNKNQHQT…QRSIYSQTEK (120 aa)) is 2 X 60 AA tandem repeats, type 1. Positions 270–432 (TKNLNQDQQH…KGRHQHGSHG (163 aa)) are disordered. Polar residues-rich tracts occupy residues 308–317 (DVSQSSIYSQ), 324–335 (GKSQKQITIPSQ), and 343–352 (ANKISYQSSS). The 3-2 repeat unit spans residues 381-439 (LVAGKSQIQAPNPKQEPWHGENAKGESGQSTNREQDLLSHEQKGRHQHGSHGGLDIVII). The span at 413–424 (REQDLLSHEQKG) shows a compositional bias: basic and acidic residues.

The protein belongs to the semenogelin family. As to quaternary structure, occurs in disulfide-linked complexes which may also contain two less abundant 71- and 76-kDa semenogelin-related polypeptides. Interacts with EPPIN (via C-terminus); Cys-239 is a critical amino acid for both binding to EPPIN. Post-translationally, transglutaminase substrate. In terms of processing, rapidly cleaved after ejaculation by KLK3/PSA, resulting in liquefaction of the semen coagulum and the progressive release of motile spermatozoa. As to expression, seminal vesicle.

Its subcellular location is the secreted. Functionally, predominant protein in semen. It participates in the formation of a gel matrix entrapping the accessory gland secretions and ejaculated spermatozoa. Fragments of semenogelin and/or fragments of the related proteins may contribute to the activation of progressive sperm movements as the gel-forming proteins are fragmented by KLK3/PSA. Alpha-inhibin-92 and alpha-inhibin-31, derived from the proteolytic degradation of semenogelin, inhibit the secretion of pituitary follicle-stimulating hormone. The chain is Semenogelin-1 (SEMG1) from Homo sapiens (Human).